The following is a 38-amino-acid chain: Photosystem II reaction center protein L (38 aa).

Residues 17–37 form a helical membrane-spanning segment; sequence SLFWGLLLIFVLAILFSNYFF.

It belongs to the PsbL family. In terms of assembly, PSII is composed of 1 copy each of membrane proteins PsbA, PsbB, PsbC, PsbD, PsbE, PsbF, PsbH, PsbI, PsbJ, PsbK, PsbL, PsbM, PsbT, PsbX, PsbY, PsbZ, Psb30/Ycf12, at least 3 peripheral proteins of the oxygen-evolving complex and a large number of cofactors. It forms dimeric complexes.

It localises to the plastid. The protein resides in the chloroplast thylakoid membrane. Functionally, one of the components of the core complex of photosystem II (PSII). PSII is a light-driven water:plastoquinone oxidoreductase that uses light energy to abstract electrons from H(2)O, generating O(2) and a proton gradient subsequently used for ATP formation. It consists of a core antenna complex that captures photons, and an electron transfer chain that converts photonic excitation into a charge separation. This subunit is found at the monomer-monomer interface and is required for correct PSII assembly and/or dimerization. The polypeptide is Photosystem II reaction center protein L (Chara vulgaris (Common stonewort)).